The following is a 1118-amino-acid chain: Constitutive coactivator of PPAR-gamma-like protein 1 (1118 aa).

Positions proline 339–leucine 405 are interaction with YES1, SRC and FYN. Residues alanine 374 to leucine 533 form a disordered region. Residues proline 376–serine 396 show a composition bias toward low complexity. 2 stretches are compositionally biased toward polar residues: residues leucine 405–asparagine 420 and serine 435–histidine 447. Positions glycine 481–lysine 502 are enriched in basic and acidic residues. Residues alanine 503–glutamine 514 are compositionally biased toward polar residues. A Phosphothreonine modification is found at threonine 655. Residues alanine 829–glutamate 1118 are RNA binding. Omega-N-methylarginine occurs at positions 873, 884, and 886. The tract at residues alanine 921–glycine 945 is disordered. The segment covering glycine 924–glycine 936 has biased composition (polar residues). Lysine 932 carries the N6-acetyllysine modification. Serine 960 carries the post-translational modification Phosphoserine. Omega-N-methylarginine is present on residues arginine 982 and arginine 986. Serine 1023 is modified (phosphoserine). The tract at residues glutamate 1025 to alanine 1102 is disordered. Residues glutamate 1026–glutamate 1037 are compositionally biased toward basic and acidic residues. Residues serine 1038–glutamate 1051 show a composition bias toward low complexity. Serine 1044, serine 1045, and serine 1048 each carry phosphoserine. The span at histidine 1076–serine 1101 shows a compositional bias: polar residues.

Belongs to the constitutive coactivator of PPAR-gamma family. As to quaternary structure, interacts with PURA. Interacts with SRC family protein kinases YES1, SRC and FYN. Upon tyrosine phosphorylation, interacts with PIK3R1. Interacts with IGF2BP1/IMP-1 in an RNA-dependent manner. In terms of processing, arg-982 is dimethylated, probably to asymmetric dimethylarginine. Phosphorylated on tyrosine by SRC family protein kinases upon oxidative stress, for instance following UV irradiation. In terms of tissue distribution, widely expressed. In gastric mucosa, detected in the bottom region of the foveolar epithelium (at protein level).

It is found in the cytoplasm. It localises to the cell membrane. Its function is as follows. Component of the oxidative stress-induced survival signaling. May regulate the activation of SRC family protein kinases. May act as a scaffolding protein enabling SRC family protein kinases to phosphorylate and activate PI3-kinase. Binds IGF2 RNA and promotes the production of IGF2 protein. The chain is Constitutive coactivator of PPAR-gamma-like protein 1 (FAM120A) from Homo sapiens (Human).